Reading from the N-terminus, the 373-residue chain is mRNA-decapping enzyme subunit 2 (373 aa).

In terms of domain architecture, Nudix hydrolase spans 106-234; sequence CRVPVTGAII…HGVSGLKLYM (129 aa). The Nudix box motif lies at 139–160; sequence GKKSKDEEDHACAIREVLEETG. Mg(2+) is bound by residues Glu154 and Glu158. Arg178 and Tyr233 together coordinate ATP. The interval 233 to 250 is RNA binding; sequence YMVAPFLSSLKSWILKHP. Residues 275-342 are disordered; it reads GNGTATVESQ…ESHNTKPVVD (68 aa). Residues 298–323 are compositionally biased toward basic and acidic residues; sequence NSRKPELKRTTMESHSTKPELRKGTM. The segment covering 324-334 has biased composition (polar residues); that stretch reads ESHNTTATVES. Residues 370 to 373 carry the PDZ-binding motif; that stretch reads GNSA.

Belongs to the Nudix hydrolase family. DCP2 subfamily. In terms of assembly, homodimer. Catalytic component of the decapping complex. Interacts with DCP1, DCP5 and VCS. Mn(2+) is required as a cofactor. Mg(2+) serves as cofactor. In terms of tissue distribution, expressed in seedlings, mostly in root tips, root hairs, and the vascular system. Also present in roots, leaves, stems, and flowers.

The protein localises to the cytoplasm. The protein resides in the P-body. It catalyses the reaction a 5'-end (N(7)-methyl 5'-triphosphoguanosine)-ribonucleoside in mRNA + H2O = N(7)-methyl-GDP + a 5'-end phospho-ribonucleoside in mRNA + 2 H(+). Its activity is regulated as follows. Inhibited by the product 7-methyl GDP. Its function is as follows. Catalytic component of the decapping complex necessary for the degradation of mRNAs, both in normal mRNA turnover and in nonsense-mediated mRNA decay. Removes the 7-methyl guanine cap structure from mRNA molecules, yielding a 5'-phosphorylated mRNA fragment and 7m-GDP. Essential for postembryonic development, especially during the formation of the shoot apical meristem (SAM). The chain is mRNA-decapping enzyme subunit 2 (DCP2) from Arabidopsis thaliana (Mouse-ear cress).